We begin with the raw amino-acid sequence, 209 residues long: Outer-membrane lipoprotein LolB (209 aa).

The N-terminal stretch at Met1–Ala21 is a signal peptide. Cys22 carries N-palmitoyl cysteine lipidation. Residue Cys22 is the site of S-diacylglycerol cysteine attachment.

It belongs to the LolB family. In terms of assembly, monomer.

It localises to the cell outer membrane. Functionally, plays a critical role in the incorporation of lipoproteins in the outer membrane after they are released by the LolA protein. The protein is Outer-membrane lipoprotein LolB of Haemophilus influenzae (strain 86-028NP).